Here is a 368-residue protein sequence, read N- to C-terminus: Propane 2-monooxygenase, hydroxylase component small subunit (368 aa).

This sequence belongs to the TmoE/XamoE family. As to quaternary structure, the propane 2-monooxygenase multicomponent enzyme system is composed of an electron transfer component and a monooxygenase component interacting with the effector protein MimD. The electron transfer component is composed of a reductase (MimB), and the monooxygenase component is formed by a large subunit (MimA) and a small subunit (MimC). Requires the presence of the chaperonin-like protein MimG to ensure a productive folding, resulting of a soluble MimC, which leads to the active form of MimABCD.

The enzyme catalyses propane + NADH + O2 + H(+) = propan-2-ol + NAD(+) + H2O. It catalyses the reaction acetone + NADH + O2 + H(+) = hydroxyacetone + NAD(+) + H2O. It carries out the reaction butan-2-one + NADH + O2 + H(+) = 1-hydroxy-2-butanone + NAD(+) + H2O. The catalysed reaction is phenol + NADH + O2 + H(+) = hydroquinone + NAD(+) + H2O. Component of the propane 2-monooxygenase multicomponent enzyme system which is involved in the degradation of propane via the O2-dependent hydroxylation of propane. Also involved in the degradation of acetone via the O2-dependent hydroxylation of acetone. Also able to catalyze the oxidation of phenol, methylethylketone (2-butanone), 1-propanol and 2-propanol. This chain is Propane 2-monooxygenase, hydroxylase component small subunit, found in Mycolicibacterium goodii (Mycobacterium goodii).